The primary structure comprises 224 residues: 7-cyano-7-deazaguanine synthase (224 aa).

8 to 18 (LSGGMDSAAVI) is a binding site for ATP. C186, C196, C199, and C202 together coordinate Zn(2+).

It belongs to the QueC family. Requires Zn(2+) as cofactor.

It catalyses the reaction 7-carboxy-7-deazaguanine + NH4(+) + ATP = 7-cyano-7-deazaguanine + ADP + phosphate + H2O + H(+). The protein operates within purine metabolism; 7-cyano-7-deazaguanine biosynthesis. In terms of biological role, catalyzes the ATP-dependent conversion of 7-carboxy-7-deazaguanine (CDG) to 7-cyano-7-deazaguanine (preQ(0)). This chain is 7-cyano-7-deazaguanine synthase, found in Xanthomonas campestris pv. campestris (strain 8004).